We begin with the raw amino-acid sequence, 375 residues long: Serpentine receptor class alpha-39 (375 aa).

Helical transmembrane passes span 17-37 (LFAI…LFII), 51-71 (LVFL…LTAW), 99-119 (IRGT…GILL), 138-158 (LGTI…FILL), 183-203 (VYVM…VHLV), 236-256 (TPLL…VSVF), and 275-295 (LFIM…ELWL).

The protein belongs to the nematode receptor-like protein sra family.

Its subcellular location is the membrane. The polypeptide is Serpentine receptor class alpha-39 (sra-39) (Caenorhabditis elegans).